Consider the following 493-residue polypeptide: GPI alpha-1,6-mannosyltransferase 2 (493 aa).

Over 1-13 the chain is Cytoplasmic; the sequence is MWPQDPSRKEVLR. A helical membrane pass occupies residues 14–34; it reads FAVSCRILTLMLQALFNAIIP. Over 35-77 the chain is Lumenal; it reads DHHAEAFSPPRLAPSGFVDQLVEGLLGGLSHWDAEHFLFIAEH. Residues 78-98 form a helical membrane-spanning segment; the sequence is GYLYEHNFAFFPGFPLALLVG. Residues 99–113 are Cytoplasmic-facing; sequence TELLRPLRGLLSLRS. The helical transmembrane segment at 114-134 threads the bilayer; the sequence is CLLISVASLNFLFFMLAAVAL. The Lumenal segment spans residues 135–136; that stretch reads HD. Residues 137-157 form a helical membrane-spanning segment; sequence LGCLVLHCPHQSFYAALLFCL. The Cytoplasmic portion of the chain corresponds to 158-161; that stretch reads SPAN. A helical membrane pass occupies residues 162–182; that stretch reads VFLAAGYSEALFALLTFSAMG. Residues 183–192 are Lumenal-facing; sequence QLERGRVWTS. A helical membrane pass occupies residues 193-213; that stretch reads VLLFAFATGVRSNGLVSVGFL. The Cytoplasmic portion of the chain corresponds to 214–234; it reads MHSQCQGFFSSLTMLNPLRQL. Residues 235–255 form a helical membrane-spanning segment; that stretch reads FKLMASLFLSVFTLGLPFALF. The Lumenal portion of the chain corresponds to 256-327; that stretch reads QYYAYTQFCL…KYYELKQVPN (72 aa). A helical membrane pass occupies residues 328–348; sequence FLLAAPVAILVAWATWTYVTT. At 349–378 the chain is on the cytoplasmic side; sequence HPWLCLTLGLQRSKNNKTLEKPDLGFLSPQ. Residues 379–399 form a helical membrane-spanning segment; sequence VFVYVVHAAVLLLFGGLCMHV. At 400–469 the chain is on the lumenal side; sequence QVLTRFLGSS…HWKTCSPVTR (70 aa). Residues 470–490 form a helical membrane-spanning segment; that stretch reads YILGYFLTYWLLGLLLHCNFL. Residues 491–493 lie on the Cytoplasmic side of the membrane; it reads PWT.

Belongs to the PIGV family. In terms of processing, not N-glycosylated.

Its subcellular location is the endoplasmic reticulum membrane. The protein operates within glycolipid biosynthesis; glycosylphosphatidylinositol-anchor biosynthesis. Functionally, alpha-1,6-mannosyltransferase that catalyzes the transfer of the second mannose, via an alpha-1,6 bond, from a dolichol-phosphate-mannose (Dol-P-Man) to the alpha-D-Man-(1-&gt;4)-alpha-D-GlcN-(1-&gt;6)-(1-radyl,2-acyl-sn-glycero-3-phospho)-2-acyl-inositol (also termed H2) intermediate to generate an alpha-D-Man-(1-&gt;6)-alpha-D-Man-(1-&gt;4)-alpha-D-GlcN-(1-&gt;6)-(1-radyl,2-acyl-sn-glycero-3-phospho)-2-acyl-inositol (also termed H3) and participates in the seventh step of the glycosylphosphatidylinositol-anchor biosynthesis. Also transfers the second mannose on a 2-PEtn-alpha-D-Man-(1-&gt;4)-alpha-D-GlcN-(1-&gt;6)-(1-radyl,2-acyl-sn-glycero-3-phospho)-2-acyl-inositol (also termed H5). This Homo sapiens (Human) protein is GPI alpha-1,6-mannosyltransferase 2.